The primary structure comprises 583 residues: Penicillin-binding protein activator LpoA (583 aa).

A signal peptide spans 1–24 (MATILKQKLKTFFVPTAITLLLSA). Cysteine 25 carries the N-palmitoyl cysteine lipid modification. Residue cysteine 25 is the site of S-diacylglycerol cysteine attachment.

The protein belongs to the LpoA family. In terms of assembly, interacts with PBP1a.

Its subcellular location is the cell outer membrane. Its function is as follows. Regulator of peptidoglycan synthesis that is essential for the function of penicillin-binding protein 1A (PBP1a). The polypeptide is Penicillin-binding protein activator LpoA (Haemophilus ducreyi (strain 35000HP / ATCC 700724)).